An 828-amino-acid polypeptide reads, in one-letter code: Periplasmic nitrate reductase (828 aa).

A signal peptide (tat-type signal) is located at residues 1-31; that stretch reads MKLSRRSFMKANAVAAAAAAAGLSVPGVARA. The region spanning 39 to 95 is the 4Fe-4S Mo/W bis-MGD-type domain; that stretch reads IKWDKAPCRFCGTGCGVLVGTQQGRVVACQGDPDAPVNRGLNCIKGYFLPKIMYGKD. Cys-46, Cys-49, Cys-53, and Cys-81 together coordinate [4Fe-4S] cluster. Mo-bis(molybdopterin guanine dinucleotide)-binding positions include Lys-83, Gln-150, Asn-175, Cys-179, 212–219, 243–247, 262–264, Met-372, Gln-376, Asn-482, 508–509, Lys-531, Asp-558, and 718–727; these read WGANMAEM, STYQH, QSD, SD, and TGRVLEHWHT. Phe-794 is a binding site for substrate. Mo-bis(molybdopterin guanine dinucleotide) is bound by residues Asn-802 and Lys-819.

The protein belongs to the prokaryotic molybdopterin-containing oxidoreductase family. NasA/NapA/NarB subfamily. In terms of assembly, component of the periplasmic nitrate reductase NapAB complex composed of NapA and NapB. The cofactor is [4Fe-4S] cluster. It depends on Mo-bis(molybdopterin guanine dinucleotide) as a cofactor. Post-translationally, predicted to be exported by the Tat system. The position of the signal peptide cleavage has not been experimentally proven.

The protein resides in the periplasm. The enzyme catalyses 2 Fe(II)-[cytochrome] + nitrate + 2 H(+) = 2 Fe(III)-[cytochrome] + nitrite + H2O. Its function is as follows. Catalytic subunit of the periplasmic nitrate reductase complex NapAB. Receives electrons from NapB and catalyzes the reduction of nitrate to nitrite. The chain is Periplasmic nitrate reductase from Shigella flexneri serotype 5b (strain 8401).